We begin with the raw amino-acid sequence, 447 residues long: Kynureninase (447 aa).

Residues Leu106, Thr107, Phe134–Asp137, Asp220, His223, and Tyr245 each bind pyridoxal 5'-phosphate. An N6-(pyridoxal phosphate)lysine modification is found at Lys246. The pyridoxal 5'-phosphate site is built by Trp275 and Asn303.

It belongs to the kynureninase family. As to quaternary structure, homodimer. The cofactor is pyridoxal 5'-phosphate.

The protein resides in the cytoplasm. The enzyme catalyses L-kynurenine + H2O = anthranilate + L-alanine + H(+). The catalysed reaction is 3-hydroxy-L-kynurenine + H2O = 3-hydroxyanthranilate + L-alanine + H(+). It functions in the pathway amino-acid degradation; L-kynurenine degradation; L-alanine and anthranilate from L-kynurenine: step 1/1. It participates in cofactor biosynthesis; NAD(+) biosynthesis; quinolinate from L-kynurenine: step 2/3. Its function is as follows. Catalyzes the cleavage of L-kynurenine (L-Kyn) and L-3-hydroxykynurenine (L-3OHKyn) into anthranilic acid (AA) and 3-hydroxyanthranilic acid (3-OHAA), respectively. The polypeptide is Kynureninase (Eremothecium gossypii (strain ATCC 10895 / CBS 109.51 / FGSC 9923 / NRRL Y-1056) (Yeast)).